Consider the following 144-residue polypeptide: Conopressin-conophysin (144 aa).

An N-terminal signal peptide occupies residues 1–27 (MTRSALQMGRLTLVLCLLLQLVLVTQA). Cys28 and Cys33 are disulfide-bonded. Aspartic acid 1-amide is present on Asp36. A propeptide spanning residues 37 to 44 (GERDVDGR) is cleaved from the precursor. 7 disulfides stabilise this stretch: Cys50–Cys90, Cys53–Cys64, Cys58–Cys80, Cys65–Cys70, Cys97–Cys117, Cys109–Cys129, and Cys118–Cys123. The propeptide occupies 131–144 (KESKSGIRVGCQRS).

It belongs to the vasopressin/oxytocin family. In terms of tissue distribution, expressed by the venom duct.

The protein resides in the secreted. This chain is Conopressin-conophysin, found in Conus bayani (Bayan's cone).